The primary structure comprises 121 residues: Small ribosomal subunit protein uS13 (121 aa).

Residues 97–121 form a disordered region; that stretch reads VRGQRTRTNARTRRGARKTVAGKKK. Residues 100-121 are compositionally biased toward basic residues; the sequence is QRTRTNARTRRGARKTVAGKKK.

The protein belongs to the universal ribosomal protein uS13 family. Part of the 30S ribosomal subunit. Forms a loose heterodimer with protein S19. Forms two bridges to the 50S subunit in the 70S ribosome.

Its function is as follows. Located at the top of the head of the 30S subunit, it contacts several helices of the 16S rRNA. In the 70S ribosome it contacts the 23S rRNA (bridge B1a) and protein L5 of the 50S subunit (bridge B1b), connecting the 2 subunits; these bridges are implicated in subunit movement. Contacts the tRNAs in the A and P-sites. The chain is Small ribosomal subunit protein uS13 from Synechococcus sp. (strain CC9902).